The chain runs to 503 residues: Cysteine--tRNA ligase (503 aa).

C31 provides a ligand contact to Zn(2+). The 'HIGH' region signature appears at 33–43; it reads PTVYDYAHIGN. Positions 225, 264, and 268 each coordinate Zn(2+). The 'KMSKS' region signature appears at 297-301; sequence KMSKS. K300 provides a ligand contact to ATP.

Belongs to the class-I aminoacyl-tRNA synthetase family. In terms of assembly, monomer. It depends on Zn(2+) as a cofactor.

The protein localises to the cytoplasm. It carries out the reaction tRNA(Cys) + L-cysteine + ATP = L-cysteinyl-tRNA(Cys) + AMP + diphosphate. This Bartonella tribocorum (strain CIP 105476 / IBS 506) protein is Cysteine--tRNA ligase.